A 123-amino-acid polypeptide reads, in one-letter code: MRIKRSVHARKKRREKFLKSAKGYRGAIKRRYRLAKQHYYRAKWYAYAGRKLKKRDFRSLWITRINIAARQNGLKYSQLMHGLKLANISVNRKMLAELAINDPPAFSEYVKIAKEQLQKEAVK.

It belongs to the bacterial ribosomal protein bL20 family.

Functionally, binds directly to 23S ribosomal RNA and is necessary for the in vitro assembly process of the 50S ribosomal subunit. It is not involved in the protein synthesizing functions of that subunit. The chain is Large ribosomal subunit protein bL20 from Pseudothermotoga lettingae (strain ATCC BAA-301 / DSM 14385 / NBRC 107922 / TMO) (Thermotoga lettingae).